The chain runs to 27 residues: Cationic protein C1 (27 aa).

The protein localises to the secreted. Its subcellular location is the nematocyst. This is Cationic protein C1 from Bunodosoma caissarum (Sea anemone).